The following is a 272-amino-acid chain: Exosome complex component MTR3 (272 aa).

Positions 1–36 (MPGDHRRIRGPEESQPPQLYAADEEEAPGTRDPTRL) are disordered.

The protein belongs to the RNase PH family. As to quaternary structure, component of the RNA exosome core complex (Exo-9), composed of EXOSC1, EXOSC2, EXOSC3, EXOSC4, EXOSC5, EXOSC6, EXOSC7, EXOSC8 and EXOSC9; within the complex interacts with EXOSC1, EXOSC7 and EXOSC8. The catalytically inactive Exo-9 may associate with the catalytic subunit EXOSC10/RRP6. Exo-9 may associate with DIS3 to form the nucleolar exosome complex, or DIS3L to form the cytoplasmic exosome complex. Exo-9 is formed by a hexameric base ring consisting of the heterodimers EXOSC4-EXOSC9, EXOSC5-EXOSC8 and EXOSC6-EXOSC7, and a cap ring consisting of EXOSC1, EXOSC2 and EXOSC3. The RNA exosome complex associates with cofactors EXOSC10/RRP6, C1D/RRP47, MPHOSPH6/MPP6 and MTREX/MTR4.

The protein localises to the cytoplasm. The protein resides in the nucleus. Its subcellular location is the nucleolus. In terms of biological role, non-catalytic component of the RNA exosome complex which has 3'-&gt;5' exoribonuclease activity and participates in a multitude of cellular RNA processing and degradation events. In the nucleus, the RNA exosome complex is involved in proper maturation of stable RNA species such as rRNA, snRNA and snoRNA, in the elimination of RNA processing by-products and non-coding 'pervasive' transcripts, such as antisense RNA species and promoter-upstream transcripts (PROMPTs), and of mRNAs with processing defects, thereby limiting or excluding their export to the cytoplasm. The RNA exosome may be involved in Ig class switch recombination (CSR) and/or Ig variable region somatic hypermutation (SHM) by targeting AICDA deamination activity to transcribed dsDNA substrates. In the cytoplasm, the RNA exosome complex is involved in general mRNA turnover and specifically degrades inherently unstable mRNAs containing AU-rich elements (AREs) within their 3' untranslated regions, and in RNA surveillance pathways, preventing translation of aberrant mRNAs. It seems to be involved in degradation of histone mRNA. The catalytic inactive RNA exosome core complex of 9 subunits (Exo-9) is proposed to play a pivotal role in the binding and presentation of RNA for ribonucleolysis, and to serve as a scaffold for the association with catalytic subunits and accessory proteins or complexes. The protein is Exosome complex component MTR3 (EXOSC6) of Homo sapiens (Human).